Consider the following 210-residue polypeptide: Menaquinone reductase, multiheme cytochrome c subunit (210 aa).

A helical transmembrane segment spans residues 20–40 (GGAAPFFVGLVVALVFGWWAF). Heme contacts are provided by cysteine 67, cysteine 70, histidine 71, cysteine 88, cysteine 91, histidine 92, cysteine 140, cysteine 143, histidine 144, cysteine 152, cysteine 155, histidine 156, cysteine 186, cysteine 189, histidine 190, cysteine 205, cysteine 208, and histidine 209.

It belongs to the multiheme cytochrome c family. As to quaternary structure, the Qrc complex is composed of four subunits: QrcA, QrcB, QrcC and QrcD. Can form a supercomplex with the [NiFe] hydrogenase HynA1 and the tetraheme Type I cytochrome c3 TpIc(3), its physiological electron donors. Heme c serves as cofactor.

Its subcellular location is the cell inner membrane. Functionally, component of the respiratory Qrc complex, that catalyzes the reduction of the menaquinone pool using electrons transferred from the reduced periplasmic cytochrome c3, and which is probably involved in sulfate respiration. Is likely essential for growth on H(2) or formate since the periplasmic hydrogenases and/or formate dehydrogenases act as primary electron donors for the Qrc complex. This Nitratidesulfovibrio vulgaris (strain ATCC 29579 / DSM 644 / CCUG 34227 / NCIMB 8303 / VKM B-1760 / Hildenborough) (Desulfovibrio vulgaris) protein is Menaquinone reductase, multiheme cytochrome c subunit.